The sequence spans 444 residues: N-succinylarginine dihydrolase (444 aa).

Substrate-binding positions include 19 to 28 (SGLSVGNIAS), N110, and 137 to 138 (HR). E174 is an active-site residue. A substrate-binding site is contributed by R214. The active site involves H250. Substrate contacts are provided by D252 and N362. Residue C368 is the Nucleophile of the active site.

Belongs to the succinylarginine dihydrolase family. As to quaternary structure, homodimer.

It carries out the reaction N(2)-succinyl-L-arginine + 2 H2O + 2 H(+) = N(2)-succinyl-L-ornithine + 2 NH4(+) + CO2. It participates in amino-acid degradation; L-arginine degradation via AST pathway; L-glutamate and succinate from L-arginine: step 2/5. In terms of biological role, catalyzes the hydrolysis of N(2)-succinylarginine into N(2)-succinylornithine, ammonia and CO(2). In Aliivibrio salmonicida (strain LFI1238) (Vibrio salmonicida (strain LFI1238)), this protein is N-succinylarginine dihydrolase.